A 289-amino-acid chain; its full sequence is MSKNKLLLGSHVGFKAKNYLVGSVLETLEYDGNCFMVFTGPPQNFMRKELDQNLIDEAVKLMKEKNPLLLENIVVHAPYLINLGSPKESTRSLGLNQLIVEINRTNQIHSKLIVLHPGSALDSDRNVAINHIADNLNKAIEATDNDVIICVETMAGKGSEVGINFEEVSKIVSGVKNKKRIGVCLDTCHMHDSGIDISDPDQTLEEFSKYLDLSYIKVIHLNDSKNEIGSRKDRHDNIGYGKVGFDYLVKWAHNEKLANVPKILETPYRDDKPIYKQEIINLNSKEWKE.

Zn(2+)-binding residues include His76, His116, Glu152, Asp186, His189, His220, Asp233, His235, and Glu265.

This sequence belongs to the AP endonuclease 2 family. The cofactor is Zn(2+).

It catalyses the reaction Endonucleolytic cleavage to 5'-phosphooligonucleotide end-products.. In terms of biological role, endonuclease IV plays a role in DNA repair. It cleaves phosphodiester bonds at apurinic or apyrimidinic (AP) sites, generating a 3'-hydroxyl group and a 5'-terminal sugar phosphate. This chain is Probable endonuclease 4, found in Malacoplasma penetrans (strain HF-2) (Mycoplasma penetrans).